Here is a 485-residue protein sequence, read N- to C-terminus: Glutamate--tRNA ligase (485 aa).

Positions 12–22 (PSPTGYMHVGN) match the 'HIGH' region motif. 4 residues coordinate Zn(2+): C109, C111, C136, and H138. The 'KMSKS' region motif lies at 253–257 (KLSKR). K256 is a binding site for ATP.

Belongs to the class-I aminoacyl-tRNA synthetase family. Glutamate--tRNA ligase type 1 subfamily. As to quaternary structure, monomer. Zn(2+) is required as a cofactor.

The protein localises to the cytoplasm. The catalysed reaction is tRNA(Glu) + L-glutamate + ATP = L-glutamyl-tRNA(Glu) + AMP + diphosphate. In terms of biological role, catalyzes the attachment of glutamate to tRNA(Glu) in a two-step reaction: glutamate is first activated by ATP to form Glu-AMP and then transferred to the acceptor end of tRNA(Glu). The protein is Glutamate--tRNA ligase of Clostridium botulinum (strain Eklund 17B / Type B).